Consider the following 537-residue polypeptide: O-phosphoserine--tRNA(Cys) ligase (537 aa).

Substrate contacts are provided by residues 186–188, 231–233, 273–274, and N317; these read HMT, SAS, and YY.

It belongs to the class-II aminoacyl-tRNA synthetase family. O-phosphoseryl-tRNA(Cys) synthetase subfamily. Homotetramer. Interacts with SepCysS.

The enzyme catalyses tRNA(Cys) + O-phospho-L-serine + ATP = O-phospho-L-seryl-tRNA(Cys) + AMP + diphosphate. Functionally, catalyzes the attachment of O-phosphoserine (Sep) to tRNA(Cys). The chain is O-phosphoserine--tRNA(Cys) ligase from Methanococcus maripaludis (strain C7 / ATCC BAA-1331).